We begin with the raw amino-acid sequence, 246 residues long: TATA-box-binding protein (246 aa).

Residues 1-27 (MSSDKTSQQTFKLAPNNSVAQSNSIDQ) form a disordered region. Tandem repeats lie at residues 53–129 (LQNI…AKII) and 143–220 (IQNI…YWVL).

This sequence belongs to the TBP family. Belongs to the TFIID complex together with the TBP-associated factors (TAFs). Binds DNA as monomer.

Its subcellular location is the nucleus. General transcription factor that functions at the core of the DNA-binding multiprotein factor TFIID. Binding of TFIID to the TATA box is the initial transcriptional step of the pre-initiation complex (PIC), playing a role in the activation of eukaryotic genes transcribed by RNA polymerase II. The protein is TATA-box-binding protein of Tetrahymena thermophila.